Consider the following 176-residue polypeptide: Membrane glycoprotein UL144 (176 aa).

The signal sequence occupies residues 1-20 (MKPLIMLICFAVILLQLGVT). 2 TNFR-Cys repeats span residues 22–56 (VCQH…SVTC) and 58–95 (PCPN…NTVC). 6 disulfides stabilise this stretch: Cys23-Cys34, Cys35-Cys48, Cys38-Cys56, Cys59-Cys71, Cys74-Cys87, and Cys77-Cys95. A helical membrane pass occupies residues 134 to 154 (LAWLSLFIFLVGIILLILYLI).

In terms of assembly, interacts with host TRIM23; this interaction causes auto-ubiquitination of TRAF6, leading to NF-kappaB activation.

It localises to the membrane. Activates NF-kappaB in a tumor necrosis factor receptor (TNFR)-associated factor 6 (TRAF6)-dependent manner, causing the up-regulation of the chemokine CCL22. This chain is Membrane glycoprotein UL144 (UL144), found in Homo sapiens (Human).